The following is a 717-amino-acid chain: Ribosomal RNA large subunit methyltransferase K/L (717 aa).

Residues 44–155 form the THUMP domain; that stretch reads DAYKVCIYSY…KQFVNVFLCL (112 aa).

This sequence belongs to the methyltransferase superfamily. RlmKL family.

It localises to the cytoplasm. The enzyme catalyses guanosine(2445) in 23S rRNA + S-adenosyl-L-methionine = N(2)-methylguanosine(2445) in 23S rRNA + S-adenosyl-L-homocysteine + H(+). It carries out the reaction guanosine(2069) in 23S rRNA + S-adenosyl-L-methionine = N(2)-methylguanosine(2069) in 23S rRNA + S-adenosyl-L-homocysteine + H(+). Specifically methylates the guanine in position 2445 (m2G2445) and the guanine in position 2069 (m7G2069) of 23S rRNA. In Francisella tularensis subsp. holarctica (strain FTNF002-00 / FTA), this protein is Ribosomal RNA large subunit methyltransferase K/L.